A 260-amino-acid polypeptide reads, in one-letter code: Proliferating cell nuclear antigen (260 aa).

A DNA-binding region spans residues 61 to 80 (RCDRNLAMGVNLSSMSKILK). Residue lysine 164 forms a Glycyl lysine isopeptide (Lys-Gly) (interchain with G-Cter in ubiquitin) linkage. 2 positions are modified to phosphoserine: serine 259 and serine 260.

This sequence belongs to the PCNA family. As to quaternary structure, homotrimer. Forms a complex with activator 1 heteropentamer in the presence of ATP. Component of the replisome complex. Monoubiquitinated by the ube2b-rad18 complex on Lys-164. Monoubiquitination at Lys-164 also takes place in undamaged proliferating cells, and is mediated by the dcx(dtl) complex, leading to enhance PCNA-dependent translesion DNA synthesis.

The protein resides in the nucleus. In terms of biological role, this protein is an auxiliary protein of DNA polymerase delta and is involved in the control of eukaryotic DNA replication by increasing the polymerase's processibility during elongation of the leading strand. The sequence is that of Proliferating cell nuclear antigen (pcna) from Danio rerio (Zebrafish).